The following is a 458-amino-acid chain: F-box/WD repeat-containing protein 9 (458 aa).

N-acetylmethionine is present on Met1. Residues 1-28 (MELPPGPRDDPHAWDDDSDPELEPDTDA) are disordered. Acidic residues predominate over residues 16 to 28 (DDSDPELEPDTDA). A phosphoserine mark is found at Ser18 and Ser59. Residues 76 to 123 (VPGLLSLPPELLLEICAYLDARLVLHVLPRVCHALRDLVRDRVTWRLR) form the F-box domain. WD repeat units lie at residues 171–210 (GHFA…VEPS), 224–261 (THKG…QQFG), 264–301 (KGKA…ALLK), 305–342 (LHSS…VLQR), 344–381 (QLDS…FQLV), 387–424 (GHRS…RTIC), and 427–458 (SHHN…RLQA).

Interacts with SKP1 and CUL1.

Functionally, substrate-recognition component of the SCF (SKP1-CUL1-F-box protein)-type E3 ubiquitin ligase complex. The polypeptide is F-box/WD repeat-containing protein 9 (FBXW9) (Bos taurus (Bovine)).